The chain runs to 685 residues: UvrABC system protein C (685 aa).

Residues alanine 15–isoleucine 93 enclose the GIY-YIG domain. The UVR domain occupies glutamine 214–valine 249. The segment covering alanine 365–histidine 388 has biased composition (low complexity). Residues alanine 365–arginine 391 form a disordered region.

This sequence belongs to the UvrC family. In terms of assembly, interacts with UvrB in an incision complex.

Its subcellular location is the cytoplasm. Functionally, the UvrABC repair system catalyzes the recognition and processing of DNA lesions. UvrC both incises the 5' and 3' sides of the lesion. The N-terminal half is responsible for the 3' incision and the C-terminal half is responsible for the 5' incision. The polypeptide is UvrABC system protein C (Verminephrobacter eiseniae (strain EF01-2)).